The chain runs to 846 residues: MAASEVSIQGYSEPSDGSRPVSETGRSSSGVGIVDADTALYTELWRSCAGPLVTVPREGELVYYFPQGHIEQVEASTNQVADQQMPLYNLPSKILCRVVNVLLKAEPDTDEVYAQVTLMPEPNQDENAVKKEPMRPPPPRFHVHSFCKTLTASDTSTHGGFSVLRRHADECLPQLDMSRQPPTQELVAKDLHGNEWRFRHIFRGQPRRHLLQSGWSVFVSSKRLVAGDAFIFLRGENGELRVGVRRAMRQQGNAPSSVISSHSMHLGVLATAWHAIQTKTMFTVYYKPRTSPAEFIVPYDHYMESVKNNYSIGMRFKMRFEGEEAPEQRFTGTIVGIEDADPQRWLESKWRCLKVRWDENSSIPRPDRVSPWKIEPALSPPALNVPPVARPKRPRSSILPTSPDSSVLTREGSSRATADHSQASGFPRVLQGQELSTFRGGFAEINETDLSEKPMIWQTSVNDEKNDIHSASKRYLPDKWLPLGRPESSLTDLLSGFGSSHGFCLPSADQAAFGARLVKQQTQDQEKDFSLLGKPWSLLSSGLSLNLMDSGSKAPGIGGDTPYQMRGDARYSGYGEFSVLPGHRVANQQGSWIMPQPVSPYMQLSSHSREMMHKPSVVKQPEAVKPKEGNYKLFGIPLTSNVCTDAVMMRKSSLIDPASDMNIGIHPHQSLATDSDQRSEQSKGSKVDDGVAANDHDKQFHTFHLAARDKDGKGHSSSTRSCTKVHKQGTALGRSVDLAKFNNYDELIAELDQLFDFNGELKARSKSWLVVYTDDEGDMMLVGDDPWQEFCGMVRKIFIYTKEEVQRMNPGTLNSKGEDTSSVAEGSDAKEVKNLQLPSESGQAES.

Residues 1–12 (MAASEVSIQGYS) are compositionally biased toward polar residues. A disordered region spans residues 1–30 (MAASEVSIQGYSEPSDGSRPVSETGRSSSG). The TF-B3 DNA-binding region spans 146–248 (FCKTLTASDT…ELRVGVRRAM (103 aa)). Disordered regions lie at residues 380-423 (PPAL…HSQA) and 660-693 (DMNI…GVAA). 2 stretches are compositionally biased toward polar residues: residues 398 to 408 (ILPTSPDSSVL) and 414 to 423 (SRATADHSQA). A compositionally biased stretch (basic and acidic residues) spans 675 to 693 (SDQRSEQSKGSKVDDGVAA). The 85-residue stretch at 720–804 (RSCTKVHKQG…RKIFIYTKEE (85 aa)) folds into the PB1 domain. Polar residues-rich tracts occupy residues 809-824 (NPGT…SSVA) and 836-846 (QLPSESGQAES). The segment at 809–846 (NPGTLNSKGEDTSSVAEGSDAKEVKNLQLPSESGQAES) is disordered.

The protein belongs to the ARF family. As to quaternary structure, homodimers and heterodimers. Interacts with ASR1. In terms of tissue distribution, expressed in root, leaf and flower. Expressed in flower buds about three days before opening including ovary, petal and sepal with the highest in stamen. Expressed in stem. Expressed in fruit. Expressed in seeds.

It is found in the nucleus. In terms of biological role, auxin response factors (ARFs) are transcriptional factors that bind specifically to the DNA sequence 5'-TGTCTC-3' found in the auxin-responsive promoter elements (AuxREs). Could act as transcriptional activator or repressor. Involved in the control of fruit ripening process. Regulates expression of a number of ripening regulators, transcription factors, and ethylene biosynthesis and signaling components. May act as a transcriptional repressor of auxin-responsive genes. Regulates vegetative growth, lateral root formation and flower organ senescence, possibly partially by regulating gene expression of auxin and ethylene response factor (ERF) genes. Plays a negative role in axillary shoot meristem formation. The protein is Auxin response factor 2A of Solanum lycopersicum (Tomato).